We begin with the raw amino-acid sequence, 123 residues long: Small ribosomal subunit protein uS12 (123 aa).

The interval 1–32 (MPTINQLIRKPREAQKARDKAPALQSSPQKRG) is disordered. Basic and acidic residues predominate over residues 10 to 21 (KPREAQKARDKA). Asp-89 bears the 3-methylthioaspartic acid mark.

Belongs to the universal ribosomal protein uS12 family. In terms of assembly, part of the 30S ribosomal subunit. Contacts proteins S8 and S17. May interact with IF1 in the 30S initiation complex.

Functionally, with S4 and S5 plays an important role in translational accuracy. Interacts with and stabilizes bases of the 16S rRNA that are involved in tRNA selection in the A site and with the mRNA backbone. Located at the interface of the 30S and 50S subunits, it traverses the body of the 30S subunit contacting proteins on the other side and probably holding the rRNA structure together. The combined cluster of proteins S8, S12 and S17 appears to hold together the shoulder and platform of the 30S subunit. The polypeptide is Small ribosomal subunit protein uS12 (Azorhizobium caulinodans (strain ATCC 43989 / DSM 5975 / JCM 20966 / LMG 6465 / NBRC 14845 / NCIMB 13405 / ORS 571)).